We begin with the raw amino-acid sequence, 511 residues long: MEAEKMELKLYNTMTQQKEVLIPITPGKIGLYVCGITAYDFSHIGHARAAVSFDVLYRYLKHLDYDVTFVRNFTDVDDKIIDRANKNGEDPLDLSNRFCDEYLVDMGALQCLPPTHQPRVSEHMDNIIKMIEKIIEKDCGYVVEGDVFFSVDKSPNYGKLSGQLLEHTRAGERVAVDSRKRNPADFALWKAAKPDEPSWESPWGPGRPGWHIECSAMSVHYLSPKFDIHGGGADLKFPHHENEIAQTCAACEDSGVNYWLHNGHVTINNEKMAKSKHNFKTIREITASYHPLALRHFLMSAQYRSPLSFTASQLESSSEALYYVYQTLQDLDEGLSPYQDALSEDGGKSEQTAEGKDIIKKLKTEFESKMLDDLNTAHILTGAYQDALKFINASLSKLKKMQKKQRMSMLVSLVEIEKAAREVLDVLGLLTTLSYAEILKEMKLKTLIRAEIGEEGISQLIEERITARKNKDFAKSDEIREKLTRKGIALMDIGKETVWRPCFPSQADSST.

A Zn(2+)-binding site is contributed by C34. The 'HIGH' region motif lies at 36–46 (ITAYDFSHIGH). The Zn(2+) site is built by C214, H239, and E243. A 'KMSKS' region motif is present at residues 271–275 (KMAKS). K274 contributes to the ATP binding site. TPR repeat units follow at residues 315 to 348 (ESSS…DGGK) and 368 to 401 (SKML…LKKM).

Belongs to the class-I aminoacyl-tRNA synthetase family. Zn(2+) is required as a cofactor.

Its subcellular location is the cytoplasm. The protein resides in the cytosol. It catalyses the reaction tRNA(Cys) + L-cysteine + ATP = L-cysteinyl-tRNA(Cys) + AMP + diphosphate. The protein is Cysteine--tRNA ligase 2, cytoplasmic of Arabidopsis thaliana (Mouse-ear cress).